We begin with the raw amino-acid sequence, 662 residues long: MTKETIRVVICGDEGVGKSSLIVSLTKAEFIPTIQDVLPPISIPRDFSSSPTYSPKNTVLIDTSDSDLIALDHELKSADVIWLVYCDHESYDHVSLFWLPHFRSLGLNIPVILCKNKCDSISNVNANAMVVSENSDDDIDTKVEDEEFIPILMEFKEIDTCIKTSAKTQFDLNQAFYLCQRAITHPISPLFDAMVGELKPLAVMALKRIFLLSDLNQDSYLDDNEILGLQKKCFNKSIDVNELNFIKDLLLDISKHDQEYINRKLYVPGKGITKDGFLVLNKIYAERGRHETTWAILRTFHYTDSLCINDKILHPRLVVPDTSSVELSPKGYRFLVDIFLKFDIDNDGGLNNQELHRLFKCTPGLPKLWTSTNFPFSTVVNNKGCITLQGWLAQWSMTTFLNYSTTTAYLVYFGFQEDARLALQVTKPRKMRRRSGKLYRSNINDRKVFNCFVIGKPCCGKSSLLEAFLGRSFSEEYSPTIKPRIAVNSLELKGGKQYYLILQELGEQEYAILENKDKLKECDVICLTYDSSDPESFSYLVSLLDKFTHLQDLPLVFVASKADLDKQQQRCQIQPDELADELFVNHPLHISSRWLSSLNELFIKITEAALDPGKNTPGLPEETAAKDVDYRQTALIFGSTVGFVALCSFTLMKLFKSSKFSK.

Topologically, residues 1–634 (MTKETIRVVI…AKDVDYRQTA (634 aa)) are cytoplasmic. The region spanning 3-185 (KETIRVVICG…FYLCQRAITH (183 aa)) is the Miro 1 domain. GTP contacts are provided by residues 12–19 (GDEGVGKS), 62–64 (DTS), and 116–119 (NKCD). 2 EF-hand domains span residues 201-236 (LAVMALKRIFLLSDLNQDSYLDDNEILGLQKKCFNK) and 330-365 (KGYRFLVDIFLKFDIDNDGGLNNQELHRLFKCTPGL). Asp214, Asn216, Asp218, Tyr220, Glu225, Asp343, Asp345, Asp347, and Glu354 together coordinate Ca(2+). The Miro 2 domain occupies 446–611 (RKVFNCFVIG…FIKITEAALD (166 aa)). GTP is bound by residues 455-462 (GKPCCGKS), 491-495 (ELKGG), and 560-563 (SKAD). The helical; Anchor for type IV membrane protein transmembrane segment at 635–655 (LIFGSTVGFVALCSFTLMKLF) threads the bilayer. Over 656-662 (KSSKFSK) the chain is Mitochondrial intermembrane.

Belongs to the mitochondrial Rho GTPase family.

The protein resides in the mitochondrion outer membrane. Its function is as follows. Mitochondrial GTPase involved in mitochondrial trafficking. Probably involved in control of anterograde transport of mitochondria and their subcellular distribution. The chain is Mitochondrial Rho GTPase 1 (GEM1) from Saccharomyces cerevisiae (strain ATCC 204508 / S288c) (Baker's yeast).